The sequence spans 240 residues: ATP synthase subunit a (240 aa).

5 helical membrane-spanning segments follow: residues Leu21–Phe41, Ala83–Ile103, Asp116–Val136, Leu184–Ile204, and Leu207–Leu227.

This sequence belongs to the ATPase A chain family. As to quaternary structure, F-type ATPases have 2 components, CF(1) - the catalytic core - and CF(0) - the membrane proton channel. CF(1) has five subunits: alpha(3), beta(3), gamma(1), delta(1), epsilon(1). CF(0) has three main subunits: a(1), b(2) and c(9-12). The alpha and beta chains form an alternating ring which encloses part of the gamma chain. CF(1) is attached to CF(0) by a central stalk formed by the gamma and epsilon chains, while a peripheral stalk is formed by the delta and b chains.

It is found in the cell membrane. Functionally, key component of the proton channel; it plays a direct role in the translocation of protons across the membrane. This is ATP synthase subunit a from Macrococcus caseolyticus (strain JCSC5402) (Macrococcoides caseolyticum).